The sequence spans 334 residues: Anthranilate phosphoribosyltransferase (334 aa).

5-phospho-alpha-D-ribose 1-diphosphate is bound by residues Gly81, 84–85 (GD), Thr89, 91–94 (NIST), 109–117 (KHGSRSVSS), and Ala121. Gly81 contacts anthranilate. Ser93 contributes to the Mg(2+) binding site. Arg167 is a binding site for anthranilate. The Mg(2+) site is built by Asp225 and Glu226.

It belongs to the anthranilate phosphoribosyltransferase family. As to quaternary structure, homodimer. Mg(2+) is required as a cofactor.

The enzyme catalyses N-(5-phospho-beta-D-ribosyl)anthranilate + diphosphate = 5-phospho-alpha-D-ribose 1-diphosphate + anthranilate. Its pathway is amino-acid biosynthesis; L-tryptophan biosynthesis; L-tryptophan from chorismate: step 2/5. In terms of biological role, catalyzes the transfer of the phosphoribosyl group of 5-phosphorylribose-1-pyrophosphate (PRPP) to anthranilate to yield N-(5'-phosphoribosyl)-anthranilate (PRA). This Actinobacillus pleuropneumoniae serotype 5b (strain L20) protein is Anthranilate phosphoribosyltransferase.